Reading from the N-terminus, the 318-residue chain is Homoserine kinase (318 aa).

An ATP-binding site is contributed by 97–107 (PIGSGLGSSAC).

It belongs to the GHMP kinase family. Homoserine kinase subfamily.

The protein localises to the cytoplasm. The enzyme catalyses L-homoserine + ATP = O-phospho-L-homoserine + ADP + H(+). The protein operates within amino-acid biosynthesis; L-threonine biosynthesis; L-threonine from L-aspartate: step 4/5. Catalyzes the ATP-dependent phosphorylation of L-homoserine to L-homoserine phosphate. The protein is Homoserine kinase of Vibrio cholerae serotype O1 (strain ATCC 39541 / Classical Ogawa 395 / O395).